The primary structure comprises 171 residues: uncharacterized protein (171 aa).

One can recognise an HTH gntR-type domain in the interval 30–97; sequence AGRVSAAYHA…PKKGIIICAL (68 aa). Residues 57–76 constitute a DNA-binding region (H-T-H motif); it reads EIEIARQLGMSRTPVHEAMA.

This is an uncharacterized protein from Agrobacterium vitis (Rhizobium vitis).